Reading from the N-terminus, the 632-residue chain is 2-oxoacid:ferredoxin oxidoreductase subunit alpha (632 aa).

The short motif at 254-258 (YPITP) is the YPITP motif element. Thr257 and Arg345 together coordinate substrate.

In terms of assembly, heterodimer composed of an alpha and a beta subunit.

The catalysed reaction is a 2-oxocarboxylate + 2 oxidized [2Fe-2S]-[ferredoxin] + CoA = an acyl-CoA + 2 reduced [2Fe-2S]-[ferredoxin] + CO2 + H(+). Its function is as follows. Catalyzes the coenzyme A-dependent oxidative decarboxylation of different 2-oxoacids such as 2-oxoglutarate, pyruvate and 2-oxobutyrate to form their CoA derivatives. In Saccharolobus solfataricus (Sulfolobus solfataricus), this protein is 2-oxoacid:ferredoxin oxidoreductase subunit alpha.